The following is a 320-amino-acid chain: NAD kinase (320 aa).

D96 serves as the catalytic Proton acceptor. Residues 96–97 (DG), R101, 170–171 (NE), D200, and 211–216 (TAYAFS) contribute to the NAD(+) site.

The protein belongs to the NAD kinase family. The cofactor is a divalent metal cation.

The protein localises to the cytoplasm. The catalysed reaction is NAD(+) + ATP = ADP + NADP(+) + H(+). Functionally, involved in the regulation of the intracellular balance of NAD and NADP, and is a key enzyme in the biosynthesis of NADP. Catalyzes specifically the phosphorylation on 2'-hydroxyl of the adenosine moiety of NAD to yield NADP. This is NAD kinase from Rhodococcus jostii (strain RHA1).